A 119-amino-acid polypeptide reads, in one-letter code: MVSDDIPSSKRLRPCQFILFYLRVHVFHAKKRSEIPKLLRVQEQARSRNYSRDNSSRLAGRLNYTFQELSPAFSVRYVYKLLQQDALGCFLWNFSPSPHTSLLNPRGGDIIKLRESVNA.

This is an uncharacterized protein from Saccharomyces cerevisiae (strain ATCC 204508 / S288c) (Baker's yeast).